A 912-amino-acid chain; its full sequence is Probable transmembrane GTPase FZO-like, chloroplastic (912 aa).

The N-terminal 54 residues, Met1–Ser54, are a transit peptide targeting the chloroplast. Positions Ser51–Tyr71 are disordered. Over Ala55 to Glu773 the chain is Stromal. Residues Asn359 to Thr364 and Ser521 contribute to the GTP site. The chain crosses the membrane as a helical span at residues Val774–Ser794. Residues Val795–Glu801 are Chloroplast intermembrane-facing. A helical membrane pass occupies residues Asp802 to Tyr822. The Stromal segment spans residues Arg823–Leu912. Positions Asp877 to His904 form a coiled coil.

Belongs to the TRAFAC class dynamin-like GTPase superfamily. Dynamin/Fzo/YdjA family. Mitofusin subfamily.

Its subcellular location is the plastid. The protein resides in the chloroplast inner membrane. It is found in the chloroplast thylakoid membrane. Functionally, probable membrane-remodeling GTPase that plays a unique role in the in the determination of thylakoid and chloroplast morphology and regulates organization of the thylakoid network. Not involved in the determination of mitochondrial morphology or ultrastructure. In Arabidopsis thaliana (Mouse-ear cress), this protein is Probable transmembrane GTPase FZO-like, chloroplastic.